The chain runs to 339 residues: Ketol-acid reductoisomerase (NADP(+)) (339 aa).

The KARI N-terminal Rossmann domain occupies 1-182 (MRVYYDRDAD…GGGRAGIIET (182 aa)). Residues 24–27 (YGSQ), Arg-48, Ser-51, Ser-53, and 83–86 (DELQ) contribute to the NADP(+) site. His-108 is a catalytic residue. An NADP(+)-binding site is contributed by Gly-134. The KARI C-terminal knotted domain maps to 183–328 (SFREETETDL…ARLRDMMPWI (146 aa)). Residues Asp-191, Glu-195, Glu-227, and Glu-231 each coordinate Mg(2+). Ser-252 serves as a coordination point for substrate.

Belongs to the ketol-acid reductoisomerase family. Requires Mg(2+) as cofactor.

The catalysed reaction is (2R)-2,3-dihydroxy-3-methylbutanoate + NADP(+) = (2S)-2-acetolactate + NADPH + H(+). The enzyme catalyses (2R,3R)-2,3-dihydroxy-3-methylpentanoate + NADP(+) = (S)-2-ethyl-2-hydroxy-3-oxobutanoate + NADPH + H(+). The protein operates within amino-acid biosynthesis; L-isoleucine biosynthesis; L-isoleucine from 2-oxobutanoate: step 2/4. It functions in the pathway amino-acid biosynthesis; L-valine biosynthesis; L-valine from pyruvate: step 2/4. Involved in the biosynthesis of branched-chain amino acids (BCAA). Catalyzes an alkyl-migration followed by a ketol-acid reduction of (S)-2-acetolactate (S2AL) to yield (R)-2,3-dihydroxy-isovalerate. In the isomerase reaction, S2AL is rearranged via a Mg-dependent methyl migration to produce 3-hydroxy-3-methyl-2-ketobutyrate (HMKB). In the reductase reaction, this 2-ketoacid undergoes a metal-dependent reduction by NADPH to yield (R)-2,3-dihydroxy-isovalerate. In Afipia carboxidovorans (strain ATCC 49405 / DSM 1227 / KCTC 32145 / OM5) (Oligotropha carboxidovorans), this protein is Ketol-acid reductoisomerase (NADP(+)).